We begin with the raw amino-acid sequence, 86 residues long: Large ribosomal subunit protein bL27 (86 aa).

Positions 1 to 10 (MAQKKGGGST) are enriched in gly residues. Residues 1–21 (MAQKKGGGSTRNGRDSESKRL) are disordered.

It belongs to the bacterial ribosomal protein bL27 family.

The sequence is that of Large ribosomal subunit protein bL27 from Cupriavidus taiwanensis (strain DSM 17343 / BCRC 17206 / CCUG 44338 / CIP 107171 / LMG 19424 / R1) (Ralstonia taiwanensis (strain LMG 19424)).